We begin with the raw amino-acid sequence, 140 residues long: Perlin matrix protein (140 aa).

The N-terminal stretch at 1 to 26 (MTCTLRLTVAALVLLGICHLSRPVAA) is a signal peptide.

This sequence belongs to the N16 matrix protein family. Heterooligomer; disulfide-linked. Pif97, Pif80, N16 and other proteins form a complex. In terms of tissue distribution, component of conchiolin, the organic matrix of nacre. Only expressed in the dorsal region of the mantle.

It localises to the secreted. It is found in the extracellular space. The protein resides in the extracellular matrix. Its function is as follows. May be specifically involved in the formation of the nacreous layer. This is Perlin matrix protein from Margaritifera margaritifera (Freshwater pearl mussel).